Consider the following 531-residue polypeptide: Lysine--tRNA ligase, mitochondrial (531 aa).

A mitochondrion-targeting transit peptide spans 1 to 18 (MISRGLLSKGILSIIKRK).

The protein belongs to the class-II aminoacyl-tRNA synthetase family.

It localises to the mitochondrion. The catalysed reaction is tRNA(Lys) + L-lysine + ATP = L-lysyl-tRNA(Lys) + AMP + diphosphate. The chain is Lysine--tRNA ligase, mitochondrial (msk1) from Schizosaccharomyces pombe (strain 972 / ATCC 24843) (Fission yeast).